The chain runs to 158 residues: Transcription elongation factor GreA (158 aa).

Belongs to the GreA/GreB family.

In terms of biological role, necessary for efficient RNA polymerase transcription elongation past template-encoded arresting sites. The arresting sites in DNA have the property of trapping a certain fraction of elongating RNA polymerases that pass through, resulting in locked ternary complexes. Cleavage of the nascent transcript by cleavage factors such as GreA or GreB allows the resumption of elongation from the new 3'terminus. GreA releases sequences of 2 to 3 nucleotides. In Psychrobacter arcticus (strain DSM 17307 / VKM B-2377 / 273-4), this protein is Transcription elongation factor GreA.